We begin with the raw amino-acid sequence, 530 residues long: Glucose-6-phosphate isomerase (530 aa).

The active-site Proton donor is glutamate 335. Catalysis depends on residues histidine 366 and lysine 495.

The protein belongs to the GPI family.

The protein resides in the cytoplasm. It carries out the reaction alpha-D-glucose 6-phosphate = beta-D-fructose 6-phosphate. It functions in the pathway carbohydrate biosynthesis; gluconeogenesis. The protein operates within carbohydrate degradation; glycolysis; D-glyceraldehyde 3-phosphate and glycerone phosphate from D-glucose: step 2/4. Catalyzes the reversible isomerization of glucose-6-phosphate to fructose-6-phosphate. The protein is Glucose-6-phosphate isomerase of Roseobacter denitrificans (strain ATCC 33942 / OCh 114) (Erythrobacter sp. (strain OCh 114)).